The primary structure comprises 409 residues: Probable tRNA pseudouridine synthase D (409 aa).

Aspartate 73 (nucleophile) is an active-site residue. The TRUD domain maps to 146 to 365; sequence GFPNFFGDQR…SSGDRRIISA (220 aa).

It belongs to the pseudouridine synthase TruD family.

The enzyme catalyses uridine(13) in tRNA = pseudouridine(13) in tRNA. In terms of biological role, could be responsible for synthesis of pseudouridine from uracil-13 in transfer RNAs. The sequence is that of Probable tRNA pseudouridine synthase D from Thermoplasma volcanium (strain ATCC 51530 / DSM 4299 / JCM 9571 / NBRC 15438 / GSS1).